The primary structure comprises 222 residues: Charged multivesicular body protein 2a (222 aa).

Met-1 carries the N-acetylmethionine modification. Positions 12–53 form a coiled coil; sequence EELLRQNQRALNRAMRELDRERQKLETQEKKIIADIKKMAKQ. The interval 56-222 is interaction with VPS4B; it reads MDAVRIMAKD…EERLKNLRRD (167 aa). Over residues 179–188 the composition is skewed to polar residues; sequence LSNLPSTGGS. The interval 179–198 is disordered; that stretch reads LSNLPSTGGSLSVAAGGKKA. At Ser-184 the chain carries Phosphoserine. Residue Thr-185 is modified to Phosphothreonine. Phosphoserine is present on residues Ser-188, Ser-190, and Ser-203. The stretch at 195-222 forms a coiled coil; sequence GKKAEATASALADADADLEERLKNLRRD. Residues 210–220 carry the MIT-interacting motif motif; it reads ADLEERLKNLR. The interval 217–222 is interaction with VTA1; it reads KNLRRD.

It belongs to the SNF7 family. Probable core component of the endosomal sorting required for transport complex III (ESCRT-III). ESCRT-III components are thought to multimerize to form a flat lattice on the perimeter membrane of the endosome. Several assembly forms of ESCRT-III may exist that interact and act sequentially. In vitro, heteromerizes with CHMP3 (but not CHMP4) to form helical tubular structures that expose membrane-interacting sites on the outside whereas VPS4B can associate on the inside of the tubule. Interacts with CHMP1B, CHMP2B, CHMP3, CHMP4A, CHMP4B, CHMP4C and CHMP5. Interacts with VPS4A; the interaction is direct. Interacts with VPS4B; the interaction is direct. Interacts with MITD1. Interacts with VTA1; the interaction probably involves the open conformation of CHMP2A. Post-translationally, ISGylated in a CHMP5-dependent manner. Isgylation weakens and inhibits its interactions with VPS4A and VTA1 respectively. As to expression, widely expressed. Highly expressed in brain, heart, liver and kidney.

It is found in the late endosome membrane. The protein localises to the cytoplasm. Its subcellular location is the nucleus envelope. Its function is as follows. Probable core component of the endosomal sorting required for transport complex III (ESCRT-III) which is involved in multivesicular bodies (MVBs) formation and sorting of endosomal cargo proteins into MVBs. MVBs contain intraluminal vesicles (ILVs) that are generated by invagination and scission from the limiting membrane of the endosome and mostly are delivered to lysosomes enabling degradation of membrane proteins, such as stimulated growth factor receptors, lysosomal enzymes and lipids. The MVB pathway appears to require the sequential function of ESCRT-O, -I,-II and -III complexes. ESCRT-III proteins mostly dissociate from the invaginating membrane before the ILV is released. The ESCRT machinery also functions in topologically equivalent membrane fission events, such as the terminal stages of cytokinesis. Together with SPAST, the ESCRT-III complex promotes nuclear envelope sealing and mitotic spindle disassembly during late anaphase. Recruited to the reforming nuclear envelope (NE) during anaphase by LEMD2. ESCRT-III proteins are believed to mediate the necessary vesicle extrusion and/or membrane fission activities, possibly in conjunction with the AAA ATPase VPS4. This chain is Charged multivesicular body protein 2a (Chmp2a), found in Mus musculus (Mouse).